The sequence spans 549 residues: Glucose-6-phosphate isomerase (549 aa).

E355 (proton donor) is an active-site residue. Residues H386 and K514 contribute to the active site.

It belongs to the GPI family.

The protein localises to the cytoplasm. It catalyses the reaction alpha-D-glucose 6-phosphate = beta-D-fructose 6-phosphate. It functions in the pathway carbohydrate biosynthesis; gluconeogenesis. Its pathway is carbohydrate degradation; glycolysis; D-glyceraldehyde 3-phosphate and glycerone phosphate from D-glucose: step 2/4. Catalyzes the reversible isomerization of glucose-6-phosphate to fructose-6-phosphate. The polypeptide is Glucose-6-phosphate isomerase (Salmonella enteritidis PT4 (strain P125109)).